The primary structure comprises 702 residues: MNHTHETIIAGRPMKVEFGKLGMLSDAAILMSYGDTVILTNVNASEKPREGIDFFPLSVEYEERLYSVGKIPGGFIKREGKPSEKAILNGRAIDRPLRPLFPKGYRNDVQVVCTVVSVENDNLPEILAINAASMALCLSSIPFTTPVAAVQVGLIGEEFILNPTSKEREESSLQLTVCATKERVMMIEAGGDEIPEDTMINAIKFGFDKCQDIIKFQEEAVSMFGKEKKVPELHKVPEEIEEAVREFAFDMISESMHITDRDERNAAMDEVKAKINEEFEEKYPDNMSDIGEAVYDMQKEVVRHMLLKEGKRPDGRAFDEVRNIGCEVGLLPRTHGTGLFTRGLTQVMTVATLGAISEIQILDGIGEEESKRYMHHYNFPAYSVGEVRPLRGPGRREIGHGALAERALEPLIPSEAEFPYTIRLVSEVLSSNGSTSQASVCGSTLALLDAGVPIKRPAAGIAMGLITSKDLTEEEVLTDIQGLEDFFGDMDFKVAGTEEGITSIQVDTKIKGLSEKVIHDAIYGARKARLMILDKIKECIPAPREEVSKYAPKTSTLQIDPEKIRDVIGAGGKVINKIIADTGVKIDIKEDGLVYVSSAESEGVKEAVKIIEGLTKEVKSGEIYLGKVTKIAQFGAFVEVLPNKEGLVHISKLDNKRVEKVEDIVSVGDEILVKVTEIDSQGRINLSRKDAIKEAEEENKQQ.

Positions 485 and 491 each coordinate Mg(2+). Positions 552–611 (PKTSTLQIDPEKIRDVIGAGGKVINKIIADTGVKIDIKEDGLVYVSSAESEGVKEAVKII) constitute a KH domain. Residues 621-689 (GEIYLGKVTK…SQGRINLSRK (69 aa)) form the S1 motif domain.

The protein belongs to the polyribonucleotide nucleotidyltransferase family. Mg(2+) is required as a cofactor.

Its subcellular location is the cytoplasm. The catalysed reaction is RNA(n+1) + phosphate = RNA(n) + a ribonucleoside 5'-diphosphate. In terms of biological role, involved in mRNA degradation. Catalyzes the phosphorolysis of single-stranded polyribonucleotides processively in the 3'- to 5'-direction. This chain is Polyribonucleotide nucleotidyltransferase, found in Clostridium perfringens (strain SM101 / Type A).